We begin with the raw amino-acid sequence, 96 residues long: MSQNILRHELIGLNLEVVKSTDSGLISTKGRVINETRNTLVLEKENGKEITLVKEISTFRIQFESENVVKIDIDGRLLVGRPEDRLKRKIKQLYSY.

Belongs to the eukaryotic/archaeal RNase P protein component 1 family. In terms of assembly, consists of a catalytic RNA component and at least 5 protein subunits.

Its subcellular location is the cytoplasm. The enzyme catalyses Endonucleolytic cleavage of RNA, removing 5'-extranucleotides from tRNA precursor.. In terms of biological role, part of ribonuclease P, a protein complex that generates mature tRNA molecules by cleaving their 5'-ends. The chain is Ribonuclease P protein component 1 from Methanococcus maripaludis (strain DSM 14266 / JCM 13030 / NBRC 101832 / S2 / LL).